The sequence spans 50 residues: Toxic protein HokC (50 aa).

Residues 1–5 (MKQHK) lie on the Cytoplasmic side of the membrane. Residues 6 to 24 (AMIVALIVICITAVVAALV) form a helical; Signal-anchor for type II membrane protein membrane-spanning segment. Over 25-50 (TRKDLCEVHIRTGQTEVAVFTAYESE) the chain is Periplasmic.

This sequence belongs to the Hok/Gef family. As to quaternary structure, homodimer; disulfide-linked.

It localises to the cell inner membrane. Functionally, toxic component of a type I toxin-antitoxin (TA) system. When overexpressed kills cells within minutes; causes collapse of the transmembrane potential and arrest of respiration. Its toxic effect is probably neutralized by antisense antitoxin RNA SokC. In Escherichia coli (strain K12), this protein is Toxic protein HokC.